Reading from the N-terminus, the 483-residue chain is Probable cytosol aminopeptidase (483 aa).

2 residues coordinate Mn(2+): Lys-245 and Asp-250. Lys-257 is a catalytic residue. Mn(2+) is bound by residues Asp-268, Asp-327, and Glu-329. Arg-331 is an active-site residue.

This sequence belongs to the peptidase M17 family. Mn(2+) serves as cofactor.

It is found in the cytoplasm. The catalysed reaction is Release of an N-terminal amino acid, Xaa-|-Yaa-, in which Xaa is preferably Leu, but may be other amino acids including Pro although not Arg or Lys, and Yaa may be Pro. Amino acid amides and methyl esters are also readily hydrolyzed, but rates on arylamides are exceedingly low.. It carries out the reaction Release of an N-terminal amino acid, preferentially leucine, but not glutamic or aspartic acids.. Functionally, presumably involved in the processing and regular turnover of intracellular proteins. Catalyzes the removal of unsubstituted N-terminal amino acids from various peptides. The chain is Probable cytosol aminopeptidase from Wolinella succinogenes (strain ATCC 29543 / DSM 1740 / CCUG 13145 / JCM 31913 / LMG 7466 / NCTC 11488 / FDC 602W) (Vibrio succinogenes).